Here is a 1845-residue protein sequence, read N- to C-terminus: Histone-lysine N-methyltransferase, H3 lysine-79 specific (1845 aa).

Polar residues predominate over residues 1-44 (MSTNSTPRKQKLSNSKSLQNSPISPTVKKTNSFPLGNNIPTNIN). 8 disordered regions span residues 1 to 67 (MSTN…NGIG), 83 to 306 (PPLP…NKWT), 450 to 470 (SHDI…NKNK), 486 to 571 (QKLK…TERK), 585 to 681 (RKER…NDSY), 741 to 767 (GETF…KKIE), 862 to 881 (QTTK…AETE), and 963 to 1102 (KDNP…SNSL). 4 stretches are compositionally biased toward low complexity: residues 52-67 (NNSN…NGIG), 90-162 (SSSS…QQEP), 191-226 (PSTP…SNNS), and 239-263 (NNNN…NNNN). Residues 268 to 280 (VIDDDDDDDDDEG) are compositionally biased toward acidic residues. Positions 282–294 (SIKSTHTSTQSTP) are enriched in polar residues. Over residues 295–304 (IRDRRQRDNK) the composition is skewed to basic and acidic residues. Residues 453–464 (INNNNNNNNNNK) show a composition bias toward low complexity. Residues 585 to 679 (RKERERKERK…IEKERREKND (95 aa)) are compositionally biased toward basic and acidic residues. Residues 625 to 639 (KKKEKEKEKEKEKEK) are required for interaction with nucleosomes and DNA. Low complexity-rich tracts occupy residues 750 to 763 (NNNN…NNNN), 862 to 877 (QTTK…TTTT), 972 to 1011 (NNNR…RNNN), and 1020 to 1067 (NNNN…NNTI). Over residues 1069–1080 (KKIETIKKDINK) the composition is skewed to basic and acidic residues. Residues 1084 to 1102 (KTTTTTSSSSSSTSSSNSL) show a composition bias toward low complexity. A DOT1 domain is found at 1125–1446 (FDVGIGVPVT…KDSDIVTDQT (322 aa)). Residues 1251–1254 (YGEA), 1274–1283 (FCDIGCGIGN), and E1300 contribute to the S-adenosyl-L-methionine site. 5 disordered regions span residues 1463–1559 (LQLF…NKPI), 1610–1661 (RISP…SSND), 1735–1762 (HQKS…KKEQ), 1772–1791 (NYNN…NHNN), and 1799–1845 (TDLI…DNNK). 3 stretches are compositionally biased toward low complexity: residues 1467–1522 (SSSS…TPNS), 1541–1556 (NNNN…NSNN), and 1610–1642 (RISP…SSSD). The span at 1643–1656 (NENDDDNGDDEDDS) shows a compositional bias: acidic residues. Residues 1745-1759 (RLSRKQKKLAKKNKK) show a composition bias toward basic residues. Low complexity-rich tracts occupy residues 1799–1817 (TDLI…INND) and 1835–1845 (KDYNNINDNNK).

Belongs to the class I-like SAM-binding methyltransferase superfamily. DOT1 family.

Its subcellular location is the nucleus. It catalyses the reaction L-lysyl(79)-[histone H3] + 3 S-adenosyl-L-methionine = N(6),N(6),N(6)-trimethyl-L-lysyl(79)-[histone H3] + 3 S-adenosyl-L-homocysteine + 3 H(+). In terms of biological role, histone methyltransferase that specifically methylates histone H3 to form H3K79me. This methylation is required for telomere silencing, correct growth and development, and for resistance to DNA damage induced by UV LIGHT. This Dictyostelium discoideum (Social amoeba) protein is Histone-lysine N-methyltransferase, H3 lysine-79 specific.